Reading from the N-terminus, the 320-residue chain is Heptaprenyl diphosphate synthase component 2 (320 aa).

The isopentenyl diphosphate site is built by K45, R48, and H77. Mg(2+) is bound by residues D84 and D88. R93 contributes to the all-trans-hexaprenyl diphosphate binding site. R94 serves as a coordination point for isopentenyl diphosphate. Residues K170, T171, and Q208 each coordinate all-trans-hexaprenyl diphosphate.

This sequence belongs to the FPP/GGPP synthase family. Heterodimer of component I and II. It depends on Mg(2+) as a cofactor.

The enzyme catalyses 4 isopentenyl diphosphate + (2E,6E)-farnesyl diphosphate = all-trans-heptaprenyl diphosphate + 4 diphosphate. Its function is as follows. Supplies heptaprenyl diphosphate, the precursor for the side chain of the isoprenoid quinone menaquinone-7 (MQ-7). The polypeptide is Heptaprenyl diphosphate synthase component 2 (hepT) (Geobacillus stearothermophilus (Bacillus stearothermophilus)).